An 85-amino-acid polypeptide reads, in one-letter code: Ice-structuring protein 4 (85 aa).

The N-terminal stretch at 1–21 (MRITEANPDPDAKAVPAAAAP) is a signal peptide.

This sequence belongs to the type-I AFP family.

The protein resides in the secreted. Contributes to protect fish blood from freezing at subzero sea water temperatures. Lowers the blood freezing point. Binds to nascent ice crystals and prevents further growth. The chain is Ice-structuring protein 4 from Pseudopleuronectes americanus (Winter flounder).